Here is a 357-residue protein sequence, read N- to C-terminus: SUN domain-containing protein 3 (357 aa).

Topologically, residues 1–47 are nuclear; the sequence is MSGKTKARRAAMFFRRCSEDASGSASGNALLSEDENPDANGVTRSWK. A helical transmembrane segment spans residues 48–64; sequence IILSTMLTLTFLLVGLL. At 65–357 the chain is on the perinuclear space side; sequence NHQWLKETDV…RVHGTPGKHI (293 aa). Residues 98-146 adopt a coiled-coil conformation; the sequence is RLRMPKEQLELLKKESQNLENNFRQILFLIEQIDVLKALLRDMKDGMDN. The SUN domain occupies 193-354; that stretch reads GASIIEAGTS…YRFRVHGTPG (162 aa).

As to quaternary structure, self-associates. Interacts with SYNE1 and SPAG4/SUN4. Proposed to form a spermatogenesis-specific LINC complex with SYNE1 during sperm head formation possibly implicating a SUN domain-based heterotrimer with SPAG4/SUN4 associating with SYNE1.

It localises to the membrane. The protein localises to the nucleus envelope. Its subcellular location is the nucleus inner membrane. Its function is as follows. As a probable component of the LINC (LInker of Nucleoskeleton and Cytoskeleton) complex, involved in the connection between the nuclear lamina and the cytoskeleton. The nucleocytoplasmic interactions established by the LINC complex play an important role in the transmission of mechanical forces across the nuclear envelope and in nuclear movement and positioning. May be involved in nuclear remodeling during sperm head formation in spermatogenesis. A probable SUN3:SYNE1 LINC complex may tether spermatid nuclei to posterior cytoskeletal structures such as the manchette. This is SUN domain-containing protein 3 (SUN3) from Homo sapiens (Human).